Reading from the N-terminus, the 703-residue chain is MKQIMIFLTSFMLLAMTGQTALAKDVQVSGSLLGKSSQEQAKQQVLTSELITLYGSKDSAELTYQIPAGASSGNQQLVIEYEASNLLISPSSLTVVIDDEPVKTLKLDGDSKRKTVKLNLNKSQSAQGYHNVSLKFYGVMKEGVCVRQDTSGNWIKIYPDSRLTLADSSEAKGTSLDHYPYPFAQSGNTAEETAIVIPDNPSSAEIEAAVKTEGYLKTVDSSVSIAYVTESELKKIDKPTIVIGVDKHWNGKVKKLLKQAGLQAKGENLLLAERVLKAEGKQQPVLFAQAASEDALTKKISVMTDQTYTGQLSGDTLSISKLQQTEKKESDKLTLENFGAGDITIGADKTSSAHYFYPASAVLDENQSAKLSLKLKKSETIQASTAENESASQAAELKVMINGQPHSVRLDELGKEDKNGFYHVTVKVDPKLLQKNRYIDIQFVTTGLKENNPCNTTDEEKWVFIDKNSTLSYAIKGMSPSADFQEWPLPYAGNQDQTTLIVLPDTVSQSKLEELSLVTESFGNEAQHSYTVKKSSDVTANDAKGRNLIFIGGINQFSLLKEKSSDLLVPQEKNGSFDVSSFEMLNETTKQVVFTQASVWDSRYTMAVFAPSKGDGTAVTKEIISYLNSNDESATVLNETNSQQVFTNHQQLKSETNSSDAEQPTQDHSQKWMYIGVLALIMVVAAVFIWIAVRRKKRKTDTE.

The first 23 residues, 1 to 23 (MKQIMIFLTSFMLLAMTGQTALA), serve as a signal peptide directing secretion. A helical membrane pass occupies residues 673–693 (MYIGVLALIMVVAAVFIWIAV).

The protein localises to the cell membrane. This is an uncharacterized protein from Bacillus subtilis (strain 168).